The primary structure comprises 369 residues: UPF0284 protein sll1500 (369 aa).

This sequence belongs to the UPF0284 family.

The polypeptide is UPF0284 protein sll1500 (Synechocystis sp. (strain ATCC 27184 / PCC 6803 / Kazusa)).